Consider the following 122-residue polypeptide: Large ribosomal subunit protein uL14 (122 aa).

The protein belongs to the universal ribosomal protein uL14 family. As to quaternary structure, part of the 50S ribosomal subunit. Forms a cluster with proteins L3 and L19. In the 70S ribosome, L14 and L19 interact and together make contacts with the 16S rRNA in bridges B5 and B8.

In terms of biological role, binds to 23S rRNA. Forms part of two intersubunit bridges in the 70S ribosome. The protein is Large ribosomal subunit protein uL14 of Burkholderia multivorans (strain ATCC 17616 / 249).